Here is a 307-residue protein sequence, read N- to C-terminus: Type 2A encapsulin shell protein (307 aa).

The protein belongs to the encapsulin family. Family 2A subfamily. The encapsulin nanocompartment is formed by 60 subunits; monomers form pentamers which assemble to form shells. There are 12 charged pores where the pentamers meet as well as 3-fold axis channels and dimer channels. Isolated from bacteria in a complex with cysteine desulfurase (AC Q9KII6).

Its subcellular location is the encapsulin nanocompartment. The protein resides in the cell membrane. Its function is as follows. Shell component of a type 2A encapsulin nanocompartment. Forms encapsulin nanocompartments about 24 nm in diameter from 60 monomers, probably involved in sulfur metabolism. Probably encapsulates cysteine desulfurase. This chain is Type 2A encapsulin shell protein, found in Mycolicibacterium paratuberculosis (strain ATCC BAA-968 / K-10) (Mycobacterium paratuberculosis).